We begin with the raw amino-acid sequence, 241 residues long: Ubiquinone biosynthesis O-methyltransferase (241 aa).

4 residues coordinate S-adenosyl-L-methionine: Arg46, Gly66, Asp87, and Met131.

The protein belongs to the methyltransferase superfamily. UbiG/COQ3 family.

The catalysed reaction is a 3-demethylubiquinol + S-adenosyl-L-methionine = a ubiquinol + S-adenosyl-L-homocysteine + H(+). The enzyme catalyses a 3-(all-trans-polyprenyl)benzene-1,2-diol + S-adenosyl-L-methionine = a 2-methoxy-6-(all-trans-polyprenyl)phenol + S-adenosyl-L-homocysteine + H(+). It functions in the pathway cofactor biosynthesis; ubiquinone biosynthesis. Its function is as follows. O-methyltransferase that catalyzes the 2 O-methylation steps in the ubiquinone biosynthetic pathway. This chain is Ubiquinone biosynthesis O-methyltransferase, found in Bordetella bronchiseptica (strain ATCC BAA-588 / NCTC 13252 / RB50) (Alcaligenes bronchisepticus).